A 405-amino-acid polypeptide reads, in one-letter code: Tryptophan synthase beta chain (405 aa).

Lysine 95 is modified (N6-(pyridoxal phosphate)lysine).

The protein belongs to the TrpB family. Tetramer of two alpha and two beta chains. Requires pyridoxal 5'-phosphate as cofactor.

The enzyme catalyses (1S,2R)-1-C-(indol-3-yl)glycerol 3-phosphate + L-serine = D-glyceraldehyde 3-phosphate + L-tryptophan + H2O. Its pathway is amino-acid biosynthesis; L-tryptophan biosynthesis; L-tryptophan from chorismate: step 5/5. Its function is as follows. The beta subunit is responsible for the synthesis of L-tryptophan from indole and L-serine. This chain is Tryptophan synthase beta chain, found in Pseudomonas putida (strain ATCC 47054 / DSM 6125 / CFBP 8728 / NCIMB 11950 / KT2440).